The sequence spans 664 residues: Glycine--tRNA ligase beta subunit (664 aa).

This sequence belongs to the class-II aminoacyl-tRNA synthetase family. Tetramer of two alpha and two beta subunits.

The protein resides in the cytoplasm. It catalyses the reaction tRNA(Gly) + glycine + ATP = glycyl-tRNA(Gly) + AMP + diphosphate. This is Glycine--tRNA ligase beta subunit from Rickettsia typhi (strain ATCC VR-144 / Wilmington).